The primary structure comprises 141 residues: Large ribosomal subunit protein uL16 (141 aa).

The tract at residues 1-23 is disordered; it reads MLMPKRTKYRKQMKGRNRGKAHR.

Belongs to the universal ribosomal protein uL16 family. Part of the 50S ribosomal subunit.

Its function is as follows. Binds 23S rRNA and is also seen to make contacts with the A and possibly P site tRNAs. In Helicobacter pylori (strain P12), this protein is Large ribosomal subunit protein uL16.